We begin with the raw amino-acid sequence, 79 residues long: Conotoxin ArMSGL-0124 (79 aa).

The first 20 residues, 1–20, serve as a signal peptide directing secretion; sequence MSRLGIMVLTLLLLVYMATS. A propeptide spanning residues 21–44 is cleaved from the precursor; it reads HQDAGEKQATQRDAINFRWKRSLT. Intrachain disulfides connect Cys52–Cys64, Cys56–Cys73, and Cys63–Cys77. Leu78 is modified (leucine amide).

It belongs to the conotoxin O3 superfamily. Expressed by the venom duct.

Its subcellular location is the secreted. The sequence is that of Conotoxin ArMSGL-0124 from Conus arenatus (Sand-dusted cone).